Reading from the N-terminus, the 391-residue chain is RNA-binding motif protein, X chromosome (391 aa).

Met-1 is subject to N-acetylmethionine; in Heterogeneous nuclear ribonucleoprotein G; alternate. N-acetylvaline; in Heterogeneous nuclear ribonucleoprotein G, N-terminally processed is present on Val-2. The RRM domain occupies 8 to 86 (GKLFIGGLNT…KAIKVEQATK (79 aa)). Lys-22 participates in a covalent cross-link: Glycyl lysine isopeptide (Lys-Gly) (interchain with G-Cter in SUMO2). Lys-30 is subject to N6-acetyllysine. Over residues 61–80 (DAKDAARDMNGKSLDGKAIK) the composition is skewed to basic and acidic residues. The disordered stretch occupies residues 61–391 (DAKDAARDMN…SDRGGGRSRY (331 aa)). Glycyl lysine isopeptide (Lys-Gly) (interchain with G-Cter in SUMO2) cross-links involve residues Lys-80 and Lys-86. A phosphoserine mark is found at Ser-88 and Ser-91. Residues 109 to 120 (LRGGRGGSGGTR) are compositionally biased toward gly residues. Omega-N-methylarginine is present on residues Arg-125, Arg-144, and Arg-164. The segment covering 151–164 (RGPPPRSGGPPPKR) has biased composition (pro residues). Ser-165 carries the post-translational modification Phosphoserine. Arg-172 carries the omega-N-methylarginine modification. Residue Ser-174 is modified to Phosphoserine. Positions 186–236 (GRDSYGGPPRREPLPSRRDVYLSPRDDGYSTKDSYSSRDYPSSRDTRDYAP) are necessary for the association to nascent RNAPII transcripts and nuclear localization. Composition is skewed to basic and acidic residues over residues 194-215 (PRRE…DGYS) and 241-274 (YTYR…DYSD). Ser-261, Ser-328, Ser-329, Ser-330, and Ser-332 each carry phosphoserine. The span at 323-337 (SRDSYSSSRSDLYSS) shows a compositional bias: low complexity. The necessary for RNA-binding stretch occupies residues 333–391 (DLYSSGRDRVGRQDRGLPPSMERGYPPPRDSYSSSSRGAPRGGGRGGSRSDRGGGRSRY). Residues 338–347 (GRDRVGRQDR) are compositionally biased toward basic and acidic residues. The residue at position 352 (Ser-352) is a Phosphoserine. The segment covering 362 to 371 (DSYSSSSRGA) has biased composition (low complexity). Residues 380–391 (SRSDRGGGRSRY) are compositionally biased toward basic and acidic residues.

As to quaternary structure, homomultimer. Found in the supraspliceosome complex. Identified in the spliceosome C complex. Forms a complex with ILF2, ILF3, YLPM1, KHDRBS1, NCOA5 and PPP1CA. Interacts with CLK2, KHDRBS2, KHDRBS3, SAFB/SAFB1, TRA2B and YTHDC1. Interacts with ERAP1; the interaction is RNA-independent. Interacts with PPIA/CYPA. In terms of processing, O-glycosylated. Arg-185 is dimethylated, probably to asymmetric dimethylarginine.

The protein resides in the nucleus. RNA-binding protein that plays several role in the regulation of pre- and post-transcriptional processes. Implicated in tissue-specific regulation of gene transcription and alternative splicing of several pre-mRNAs. Binds to and stimulates transcription from the tumor suppressor TXNIP gene promoter; may thus be involved in tumor suppression. When associated with SAFB, binds to and stimulates transcription from the SREBF1 promoter. Associates with nascent mRNAs transcribed by RNA polymerase II. Component of the supraspliceosome complex that regulates pre-mRNA alternative splice site selection. Can either activate or suppress exon inclusion; acts additively with TRA2B to promote exon 7 inclusion of the survival motor neuron SMN. Represses the splicing of MAPT/Tau exon 10. Binds preferentially to single-stranded 5'-CC[A/C]-rich RNA sequence motifs localized in a single-stranded conformation; probably binds RNA as a homodimer. Binds non-specifically to pre-mRNAs. Also plays a role in the cytoplasmic TNFR1 trafficking pathways; promotes both the IL-1-beta-mediated inducible proteolytic cleavage of TNFR1 ectodomains and the release of TNFR1 exosome-like vesicles to the extracellular compartment. This chain is RNA-binding motif protein, X chromosome (RBMX), found in Macaca fascicularis (Crab-eating macaque).